The chain runs to 485 residues: NADH-quinone oxidoreductase subunit N (485 aa).

The next 14 membrane-spanning stretches (helical) occupy residues 8 to 28 (LIAL…MLSI), 35 to 55 (FLNA…LWFV), 71 to 91 (GFAM…CTFA), 105 to 125 (FYLL…ANHL), 127 to 147 (TLFL…GYAF), 159 to 179 (YTIL…LVYA), 203 to 223 (LLAG…LVPF), 235 to 255 (PAPV…GVVM), 271 to 291 (VVLG…ALSQ), 297 to 317 (LLGY…IALQ), 326 to 346 (VGVY…VVSL), 373 to 393 (AAVM…LGFI), 408 to 430 (WWLV…RVAV), and 455 to 475 (IVVL…QPLI).

This sequence belongs to the complex I subunit 2 family. NDH-1 is composed of 13 different subunits. Subunits NuoA, H, J, K, L, M, N constitute the membrane sector of the complex.

It is found in the cell inner membrane. The enzyme catalyses a quinone + NADH + 5 H(+)(in) = a quinol + NAD(+) + 4 H(+)(out). Functionally, NDH-1 shuttles electrons from NADH, via FMN and iron-sulfur (Fe-S) centers, to quinones in the respiratory chain. The immediate electron acceptor for the enzyme in this species is believed to be ubiquinone. Couples the redox reaction to proton translocation (for every two electrons transferred, four hydrogen ions are translocated across the cytoplasmic membrane), and thus conserves the redox energy in a proton gradient. This chain is NADH-quinone oxidoreductase subunit N, found in Salmonella paratyphi A (strain ATCC 9150 / SARB42).